Consider the following 243-residue polypeptide: Thaumatin-like protein (243 aa).

The N-terminal stretch at 1-20 is a signal peptide; the sequence is MASINLFLFAFLLLLSHASA. Disulfide bonds link Cys29-Cys238, Cys77-Cys87, Cys92-Cys98, Cys144-Cys228, Cys149-Cys211, Cys157-Cys174, Cys178-Cys187, and Cys188-Cys198.

It belongs to the thaumatin family.

The protein is Thaumatin-like protein of Arabidopsis thaliana (Mouse-ear cress).